Consider the following 446-residue polypeptide: Glutamate-1-semialdehyde 2,1-aminomutase (446 aa).

Lys263 is modified (N6-(pyridoxal phosphate)lysine).

It belongs to the class-III pyridoxal-phosphate-dependent aminotransferase family. HemL subfamily. Pyridoxal 5'-phosphate serves as cofactor.

Its subcellular location is the cytoplasm. The enzyme catalyses (S)-4-amino-5-oxopentanoate = 5-aminolevulinate. It functions in the pathway porphyrin-containing compound metabolism; protoporphyrin-IX biosynthesis; 5-aminolevulinate from L-glutamyl-tRNA(Glu): step 2/2. This Haloquadratum walsbyi (strain DSM 16790 / HBSQ001) protein is Glutamate-1-semialdehyde 2,1-aminomutase.